Reading from the N-terminus, the 84-residue chain is Putative membrane protein insertion efficiency factor (84 aa).

It belongs to the UPF0161 family.

It localises to the cell inner membrane. In terms of biological role, could be involved in insertion of integral membrane proteins into the membrane. In Shewanella loihica (strain ATCC BAA-1088 / PV-4), this protein is Putative membrane protein insertion efficiency factor.